A 100-amino-acid chain; its full sequence is Urease subunit gamma (100 aa).

Belongs to the urease gamma subunit family. In terms of assembly, heterotrimer of UreA (gamma), UreB (beta) and UreC (alpha) subunits. Three heterotrimers associate to form the active enzyme.

It localises to the cytoplasm. It catalyses the reaction urea + 2 H2O + H(+) = hydrogencarbonate + 2 NH4(+). Its pathway is nitrogen metabolism; urea degradation; CO(2) and NH(3) from urea (urease route): step 1/1. The polypeptide is Urease subunit gamma (Mycobacterium sp. (strain JLS)).